A 123-amino-acid polypeptide reads, in one-letter code: Small ribosomal subunit protein uS12c (123 aa).

Belongs to the universal ribosomal protein uS12 family. In terms of assembly, part of the 30S ribosomal subunit.

Its subcellular location is the plastid. The protein resides in the chloroplast. With S4 and S5 plays an important role in translational accuracy. Located at the interface of the 30S and 50S subunits. This chain is Small ribosomal subunit protein uS12c (rps12), found in Chaetosphaeridium globosum (Charophycean green alga).